The primary structure comprises 145 residues: Small ribosomal subunit protein eS19 (145 aa).

A disordered region spans residues 120–145 (GGRRISENGQRDLDRIAAQTLEEDDE). The span at 123–134 (RISENGQRDLDR) shows a compositional bias: basic and acidic residues.

It belongs to the eukaryotic ribosomal protein eS19 family. As to quaternary structure, component of the small ribosomal subunit. Mature ribosomes consist of a small (40S) and a large (60S) subunit. The 40S subunit contains about 32 different proteins and 1 molecule of RNA (18S). The 60S subunit contains 45 different proteins and 3 molecules of RNA (25S, 5.8S and 5S).

Its subcellular location is the cytoplasm. Its function is as follows. Component of the ribosome, a large ribonucleoprotein complex responsible for the synthesis of proteins in the cell. The small ribosomal subunit (SSU) binds messenger RNAs (mRNAs) and translates the encoded message by selecting cognate aminoacyl-transfer RNA (tRNA) molecules. The large subunit (LSU) contains the ribosomal catalytic site termed the peptidyl transferase center (PTC), which catalyzes the formation of peptide bonds, thereby polymerizing the amino acids delivered by tRNAs into a polypeptide chain. The nascent polypeptides leave the ribosome through a tunnel in the LSU and interact with protein factors that function in enzymatic processing, targeting, and the membrane insertion of nascent chains at the exit of the ribosomal tunnel. RPS19A is required for proper maturation of the small (40S) ribosomal subunit. In Candida albicans (strain SC5314 / ATCC MYA-2876) (Yeast), this protein is Small ribosomal subunit protein eS19 (RPS19A).